Consider the following 688-residue polypeptide: Sodium channel and clathrin linker 1 (688 aa).

The residue at position 2 (Ala2) is an N-acetylalanine. The stretch at 59 to 673 (LIAEYEKHLE…SASQQLSVIT (615 aa)) forms a coiled coil. Position 681 is a phosphoserine (Ser681).

As to quaternary structure, interacts with SCN10A and clathrin. Identified in a complex containing SCN10A, clathrin and SCLT1. In terms of tissue distribution, detected in small neurons in dorsal root ganglia. Detected in C-type fibers of sciatic nerve (at protein level).

It is found in the cytoplasm. Its subcellular location is the cytoskeleton. The protein localises to the microtubule organizing center. The protein resides in the centrosome. It localises to the centriole. In terms of biological role, adapter protein that links SCN10A to clathrin. Regulates SCN10A channel activity, possibly by promoting channel internalization. The polypeptide is Sodium channel and clathrin linker 1 (Sclt1) (Rattus norvegicus (Rat)).